The primary structure comprises 580 residues: (3S,6E)-nerolidol synthase 1, chloroplastic (580 aa).

The transit peptide at 1–31 (MASSSWAFFKVFNPQIAPKSISHIGQSDLMQ) directs the protein to the chloroplast. Positions 334, 338, 478, 482, and 486 each coordinate Mg(2+). A DDXXD motif motif is present at residues 334-338 (DDIFD).

This sequence belongs to the terpene synthase family. Tpsg subfamily. Mg(2+) serves as cofactor. Requires Mn(2+) as cofactor.

Its subcellular location is the plastid. The protein resides in the chloroplast. The enzyme catalyses (2E,6E)-farnesyl diphosphate + H2O = (3S,6E)-nerolidol + diphosphate. It participates in secondary metabolite biosynthesis; terpenoid biosynthesis. Involved in monoterpene (C10) and sesquiterpene (C15) biosynthesis. Converts geranyl diphosphate (GPP) into S-linalool and farnesyl diphosphate (FPP) into (3S)-E-nerolidol. Probably not expressed in wild strawberry species. The sequence is that of (3S,6E)-nerolidol synthase 1, chloroplastic from Fragaria vesca (Woodland strawberry).